The primary structure comprises 145 residues: MVKVMVVAEVRPSEDVNKVLSAISNFFDFEKTNTRKEGIIDILVLEARTLKSLLKFHRVLRNERILDSARKYLMKGIEGNTIAFMIHKQAAAVGVLSFVDSDKESPLGAIKFYIEYQNPKEVVDWLAPRTAHGVPLWDNPIPPDV.

This sequence belongs to the UPF0201 family.

The chain is UPF0201 protein LS215_1276 from Saccharolobus islandicus (strain L.S.2.15 / Lassen #1) (Sulfolobus islandicus).